The following is a 218-amino-acid chain: Adenylate kinase (218 aa).

10–15 (GAGKGT) is an ATP binding site. Residues 30-59 (STGDMLRAAVKAGTPLGLQAKAVMDSGSLV) are NMP. AMP-binding positions include threonine 31, arginine 36, 57-59 (SLV), 85-88 (GFPR), and glutamine 92. Residues 122–159 (GRRSHPASGRTYHVRFNPPKIDGKDDLTGEALLQREDD) form an LID region. Residues arginine 123 and 132–133 (TY) each bind ATP. Positions 156 and 167 each coordinate AMP. Glycine 203 contacts ATP.

Belongs to the adenylate kinase family. In terms of assembly, monomer.

It localises to the cytoplasm. The catalysed reaction is AMP + ATP = 2 ADP. The protein operates within purine metabolism; AMP biosynthesis via salvage pathway; AMP from ADP: step 1/1. In terms of biological role, catalyzes the reversible transfer of the terminal phosphate group between ATP and AMP. Plays an important role in cellular energy homeostasis and in adenine nucleotide metabolism. The chain is Adenylate kinase from Verminephrobacter eiseniae (strain EF01-2).